The following is a 297-amino-acid chain: Adrenocorticotropic hormone receptor (297 aa).

Over 1–23 the chain is Extracellular; sequence MKHIITPYEHTNDTARNNSDCPD. N-linked (GlcNAc...) asparagine glycans are attached at residues asparagine 12 and asparagine 17. Intrachain disulfides connect cysteine 21-cysteine 253 and cysteine 245-cysteine 251. A helical transmembrane segment spans residues 24-49; that stretch reads VVLPEEIFFTISIIGVLENLIVLLAV. At 50 to 58 the chain is on the cytoplasmic side; that stretch reads VKNKNLQCP. A helical transmembrane segment spans residues 59–79; the sequence is MYFFICSLAISDMLGSLYKIL. The Extracellular portion of the chain corresponds to 80 to 104; the sequence is ENILIMFRNRGYLQPRGNFESTADD. Residues 105–126 form a helical membrane-spanning segment; sequence IIDCMFILSLLGSIFSLSVIAA. The Cytoplasmic portion of the chain corresponds to 127–147; sequence DRYITIFHALQYHSIVTMRRT. Residues 148–168 traverse the membrane as a helical segment; that stretch reads IITLTVIWIFCTGSGIAMVIF. Topologically, residues 169-180 are extracellular; it reads SHHVPTVLTFTS. Residues 181 to 199 traverse the membrane as a helical segment; it reads LFPLMLVFILCLYIHMFLL. Residues 200 to 217 are Cytoplasmic-facing; that stretch reads ARSHARKISTLPRANMKG. Residues 218–244 form a helical membrane-spanning segment; it reads AITLTILLGVFIFCWAPFILHVLLMTF. Residues 245–256 lie on the Extracellular side of the membrane; it reads CPNNPYCVCYMS. A helical transmembrane segment spans residues 257 to 278; the sequence is LFQINGMLIMCNAVIDPFIYAF. Residues 279–297 lie on the Cytoplasmic side of the membrane; the sequence is RSPELRDAFKKMFSCHRYQ. Residue cysteine 293 is the site of S-palmitoyl cysteine attachment.

It belongs to the G-protein coupled receptor 1 family. In terms of assembly, homodimer. Interacts with corticotropin (ACTH). Interacts with MRAP; this interaction targets MC2R to the plasma membrane. Interacts with MRAP2; competing with MRAP for binding to MC2R and impairing the binding of corticotropin (ACTH). Ubiquitinated by MGRN1 that may be involved in post-endocytic trafficking and/or degradation of internalized receptor.

Its subcellular location is the cell membrane. Its function is as follows. Hormone receptor primarily expressed in adrenal cortex that plays a key role in regulating adrenocortical function. Upon corticotropin (ACTH) binding, facilitates the release of adrenal glucocorticoids, including cortisol and corticosterone. In addition, MC2R is required for fetal and neonatal adrenal gland development. Mechanistically, activates adenylate cyclase (cAMP), the MAPK cascade as well as the cAMP-dependent protein kinase A pathway leading to steroidogenic factor 1/NR5A1-mediated transcriptional activation. This Mesocricetus auratus (Golden hamster) protein is Adrenocorticotropic hormone receptor (MC2R).